The sequence spans 263 residues: uncharacterized protein (263 aa).

12-19 contacts ATP; the sequence is KGGVGKTT.

The protein belongs to the ParA family. MinD subfamily.

This is an uncharacterized protein from Methanocaldococcus jannaschii (strain ATCC 43067 / DSM 2661 / JAL-1 / JCM 10045 / NBRC 100440) (Methanococcus jannaschii).